The primary structure comprises 343 residues: Thromboxane A2 receptor (343 aa).

Topologically, residues 1–29 (MWPNGSSLGPCFRPTNITLEERRLIASPW) are extracellular. Residues N4 and N16 are each glycosylated (N-linked (GlcNAc...) asparagine). A helical transmembrane segment spans residues 30-52 (FAASFCVVGLASNLLALSVLAGA). The Cytoplasmic portion of the chain corresponds to 53-66 (RQGGSHTRSSFLTF). The helical transmembrane segment at 67 to 87 (LCGLVLTDFLGLLVTGTIVVS) threads the bilayer. The Extracellular portion of the chain corresponds to 88-106 (QHAALFEWHAVDPGCRLCR). C105 and C183 are joined by a disulfide. The helical transmembrane segment at 107 to 128 (FMGVVMIFFGLSPLLLGAAMAS) threads the bilayer. Topologically, residues 129-149 (ERYLGITRPFSRPAVASQRRA) are cytoplasmic. The helical transmembrane segment at 150 to 172 (WATVGLVWAAALALGLLPLLGVG) threads the bilayer. At 173-193 (RYTVQYPGSWCFLTLGAESGD) the chain is on the extracellular side. A helical membrane pass occupies residues 194–219 (VAFGLLFSMLGGLSVGLSFLLNTVSV). Residues 220-246 (ATLCHVYHGQEAAQQRPRDSEVEMMAQ) are Cytoplasmic-facing. Residues 247-270 (LLGIMVVASVCWLPLLVFIAQTVL) traverse the membrane as a helical segment. The Extracellular portion of the chain corresponds to 271–289 (RNPPAMSPAGQLSRTTEKE). The helical transmembrane segment at 290 to 311 (LLIYLRVATWNQILDPWVYILF) threads the bilayer. The Cytoplasmic segment spans residues 312–343 (RRAVLRRLQPRLSTRPRSLSLQPQLTQRSGLQ). A phosphoserine mark is found at S329 and S331.

Belongs to the G-protein coupled receptor 1 family. In terms of assembly, interacts with RPGRIP1L. Interacts with PSMA3. Interacts with RACK1; the interaction regulates TBXA2R cell surface expression.

The protein resides in the cell membrane. Receptor for thromboxane A2 (TXA2), a potent stimulator of platelet aggregation. The activity of this receptor is mediated by a G-protein that activates a phosphatidylinositol-calcium second messenger system. In the kidney, the binding of TXA2 to glomerular TP receptors causes intense vasoconstriction. Activates phospholipase C. Its function is as follows. Activates adenylyl cyclase. In terms of biological role, inhibits adenylyl cyclase. This is Thromboxane A2 receptor (TBXA2R) from Homo sapiens (Human).